Consider the following 154-residue polypeptide: Golgi-associated plant pathogenesis-related protein 1 (154 aa).

A disordered region spans residues 1–21 (MGKSASKQFHNEVLKAHNEYR). Gly2 is lipidated: N-myristoyl glycine. The segment covering 9–21 (FHNEVLKAHNEYR) has biased composition (basic and acidic residues). The SCP domain maps to 14–132 (LKAHNEYRQK…SDGSSFVVAR (119 aa)). The stretch at 30–53 (KLCKNLNREAQQYSEALASTRILK) forms a coiled coil. An interaction with CAV1 region spans residues 91-98 (NFQQPGFT).

This sequence belongs to the CRISP family. In terms of assembly, homodimer. Interacts with CAV1. In terms of tissue distribution, highest expression in lung and peripheral leukocytes, and minor expression in liver and kidney.

It localises to the golgi apparatus membrane. The protein is Golgi-associated plant pathogenesis-related protein 1 (GLIPR2) of Homo sapiens (Human).